Reading from the N-terminus, the 453-residue chain is Tryptophan biosynthesis protein TrpCF (453 aa).

The interval 1–257 (MQDTTLKKII…TAVRSIIFGD (257 aa)) is indole-3-glycerol phosphate synthase. The N-(5'-phosphoribosyl)anthranilate isomerase stretch occupies residues 258–453 (NKVCGLTRSI…KSIFQKLRYG (196 aa)).

The protein in the N-terminal section; belongs to the TrpC family. It in the C-terminal section; belongs to the TrpF family. Monomer.

The catalysed reaction is N-(5-phospho-beta-D-ribosyl)anthranilate = 1-(2-carboxyphenylamino)-1-deoxy-D-ribulose 5-phosphate. The enzyme catalyses 1-(2-carboxyphenylamino)-1-deoxy-D-ribulose 5-phosphate + H(+) = (1S,2R)-1-C-(indol-3-yl)glycerol 3-phosphate + CO2 + H2O. It participates in amino-acid biosynthesis; L-tryptophan biosynthesis; L-tryptophan from chorismate: step 3/5. It functions in the pathway amino-acid biosynthesis; L-tryptophan biosynthesis; L-tryptophan from chorismate: step 4/5. Its function is as follows. Bifunctional enzyme that catalyzes two sequential steps of tryptophan biosynthetic pathway. The first reaction is catalyzed by the isomerase, coded by the TrpF domain; the second reaction is catalyzed by the synthase, coded by the TrpC domain. This is Tryptophan biosynthesis protein TrpCF (trpC) from Buchnera aphidicola subsp. Acyrthosiphon pisum (strain APS) (Acyrthosiphon pisum symbiotic bacterium).